The sequence spans 62 residues: uncharacterized protein (62 aa).

The next 2 helical transmembrane spans lie at histidine 9 to glycine 29 and alanine 42 to leucine 62.

It is found in the membrane. This is an uncharacterized protein from Saccharomyces cerevisiae (strain ATCC 204508 / S288c) (Baker's yeast).